The following is a 151-amino-acid chain: D-aminoacyl-tRNA deacylase (151 aa).

Positions 139 to 140 match the Gly-cisPro motif, important for rejection of L-amino acids motif; that stretch reads GP.

Belongs to the DTD family. Homodimer.

The protein localises to the cytoplasm. The catalysed reaction is glycyl-tRNA(Ala) + H2O = tRNA(Ala) + glycine + H(+). It catalyses the reaction a D-aminoacyl-tRNA + H2O = a tRNA + a D-alpha-amino acid + H(+). Its function is as follows. An aminoacyl-tRNA editing enzyme that deacylates mischarged D-aminoacyl-tRNAs. Also deacylates mischarged glycyl-tRNA(Ala), protecting cells against glycine mischarging by AlaRS. Acts via tRNA-based rather than protein-based catalysis; rejects L-amino acids rather than detecting D-amino acids in the active site. By recycling D-aminoacyl-tRNA to D-amino acids and free tRNA molecules, this enzyme counteracts the toxicity associated with the formation of D-aminoacyl-tRNA entities in vivo and helps enforce protein L-homochirality. This chain is D-aminoacyl-tRNA deacylase, found in Symbiobacterium thermophilum (strain DSM 24528 / JCM 14929 / IAM 14863 / T).